We begin with the raw amino-acid sequence, 229 residues long: Large ribosomal subunit protein uL1 (229 aa).

Belongs to the universal ribosomal protein uL1 family. As to quaternary structure, part of the 50S ribosomal subunit.

Its function is as follows. Binds directly to 23S rRNA. The L1 stalk is quite mobile in the ribosome, and is involved in E site tRNA release. In terms of biological role, protein L1 is also a translational repressor protein, it controls the translation of the L11 operon by binding to its mRNA. This chain is Large ribosomal subunit protein uL1, found in Haemophilus influenzae (strain 86-028NP).